We begin with the raw amino-acid sequence, 499 residues long: Lysine--tRNA ligase (499 aa).

Residues Glu408 and Glu415 each contribute to the Mg(2+) site.

Belongs to the class-II aminoacyl-tRNA synthetase family. As to quaternary structure, homodimer. Mg(2+) is required as a cofactor.

The protein resides in the cytoplasm. The catalysed reaction is tRNA(Lys) + L-lysine + ATP = L-lysyl-tRNA(Lys) + AMP + diphosphate. The protein is Lysine--tRNA ligase of Agrobacterium fabrum (strain C58 / ATCC 33970) (Agrobacterium tumefaciens (strain C58)).